A 460-amino-acid chain; its full sequence is Elongation factor 1-alpha (460 aa).

Glycine 2 is subject to N,N,N-trimethylglycine. N6,N6-dimethyllysine; alternate is present on lysine 3. Lysine 3 carries the N6-methyllysine; alternate modification. One can recognise a tr-type G domain in the interval 6-241 (KTHINVVVIG…DSIEPPKRPT (236 aa)). The segment at 15-22 (GHVDSGKS) is G1. Position 15–22 (15–22 (GHVDSGKS)) interacts with GTP. N6-methyllysine is present on lysine 31. Residues 71–75 (GITID) form a G2 region. The residue at position 80 (lysine 80) is an N6,N6,N6-trimethyllysine. The G3 stretch occupies residues 92-95 (DAPG). GTP-binding positions include 92-96 (DAPGH) and 154-157 (NKMD). The interval 154–157 (NKMD) is G4. A G5 region spans residues 193–195 (SGF). Lysine 317 bears the N6,N6-dimethyllysine; alternate mark. Position 317 is an N6-methyllysine; alternate (lysine 317). Lysine 391 bears the N6-methyllysine mark.

The protein belongs to the TRAFAC class translation factor GTPase superfamily. Classic translation factor GTPase family. EF-Tu/EF-1A subfamily.

It is found in the cytoplasm. This protein promotes the GTP-dependent binding of aminoacyl-tRNA to the A-site of ribosomes during protein biosynthesis. This Podospora anserina (Pleurage anserina) protein is Elongation factor 1-alpha (TEF).